We begin with the raw amino-acid sequence, 117 residues long: Large ribosomal subunit protein uL18 (117 aa).

Belongs to the universal ribosomal protein uL18 family. As to quaternary structure, part of the 50S ribosomal subunit; part of the 5S rRNA/L5/L18/L25 subcomplex. Contacts the 5S and 23S rRNAs.

Functionally, this is one of the proteins that bind and probably mediate the attachment of the 5S RNA into the large ribosomal subunit, where it forms part of the central protuberance. This is Large ribosomal subunit protein uL18 from Edwardsiella ictaluri (strain 93-146).